Here is a 277-residue protein sequence, read N- to C-terminus: Co-chaperone protein DjlA (277 aa).

Over 1 to 6 the chain is Periplasmic; the sequence is MRYWGK. Residues 7–31 traverse the membrane as a helical segment; that stretch reads LLGLVLGVMYAPGVVGALLGLLVGH. Topologically, residues 32 to 277 are cytoplasmic; the sequence is MVDRALGAKR…DLIKREKGFK (246 aa). The region spanning 211–277 is the J domain; it reads DACKVLGVNS…DLIKREKGFK (67 aa).

Homodimer.

It localises to the cell inner membrane. Its function is as follows. Regulatory DnaK co-chaperone. Direct interaction between DnaK and DjlA is needed for the induction of the wcaABCDE operon, involved in the synthesis of a colanic acid polysaccharide capsule, possibly through activation of the RcsB/RcsC phosphotransfer signaling pathway. The colanic acid capsule may help the bacterium survive conditions outside the host. The polypeptide is Co-chaperone protein DjlA (Yersinia pseudotuberculosis serotype I (strain IP32953)).